Consider the following 478-residue polypeptide: Cytochrome c-552 (478 aa).

A signal peptide spans 1–26 (MTRIKINARRIFSLLIPFFFFTSVHA). His-94 provides a ligand contact to heme c. Positions 122, 125, and 126 each coordinate heme. 6 residues coordinate heme c: Cys-160, Cys-163, His-164, Cys-209, Cys-212, and His-213. Ca(2+) contacts are provided by Glu-215, Tyr-216, Lys-261, and Gln-263. Tyr-216 lines the substrate pocket. His-264 is a substrate binding site. 9 residues coordinate heme c: His-275, Cys-282, Cys-285, His-286, His-301, Cys-314, Cys-317, His-318, and His-393.

Belongs to the cytochrome c-552 family. Requires Ca(2+) as cofactor. It depends on heme c as a cofactor.

The protein localises to the periplasm. It catalyses the reaction 6 Fe(III)-[cytochrome c] + NH4(+) + 2 H2O = 6 Fe(II)-[cytochrome c] + nitrite + 8 H(+). It participates in nitrogen metabolism; nitrate reduction (assimilation). In terms of biological role, catalyzes the reduction of nitrite to ammonia, consuming six electrons in the process. The sequence is that of Cytochrome c-552 from Escherichia coli O6:H1 (strain CFT073 / ATCC 700928 / UPEC).